Here is a 347-residue protein sequence, read N- to C-terminus: D-alanine--D-alanine ligase (347 aa).

Positions 134–332 (KLYAKDLGVK…LAQSLPKTPK (199 aa)) constitute an ATP-grasp domain. Position 161–216 (161–216 (LMNFNFPFIIKPNNAGSSLGVNVVKEEKELVYALDGAFEYSKEVLIEPFIQGVKEY)) interacts with ATP. The Mg(2+) site is built by aspartate 288, glutamate 300, and asparagine 302.

Belongs to the D-alanine--D-alanine ligase family. The cofactor is Mg(2+). Requires Mn(2+) as cofactor.

The protein localises to the cytoplasm. It carries out the reaction 2 D-alanine + ATP = D-alanyl-D-alanine + ADP + phosphate + H(+). Its pathway is cell wall biogenesis; peptidoglycan biosynthesis. Cell wall formation. The protein is D-alanine--D-alanine ligase of Helicobacter pylori (strain ATCC 700392 / 26695) (Campylobacter pylori).